The sequence spans 1300 residues: CRISPR-associated endonuclease Cas12a (1300 aa).

The wedge region 1 stretch occupies residues 1–24 (MSIYQEFVNKYSLSKTLRFELIPQ). 2 recognition domain regions span residues 25–339 (GKTL…SFVI) and 340–591 (DKLE…QKPY). 2 binds crRNA alone and in crRNA-target DNA heteroduplex regions span residues 47–51 (YKKAK) and 182–186 (FHENR). Positions 301–305 (NEYIN) are binds DNA in crRNA-target DNA heteroduplex. 2 binds crRNA in crRNA-target DNA heteroduplex regions span residues 326-329 (KQIL) and 538-541 (HKLK). The segment at 591–595 (YSDEK) is binds crRNA. The tract at residues 592-662 (SDEKFKLNFE…GYKKIVYKLL (71 aa)) is wedge region 2. The tract at residues 662–679 (LPGANKMLPKVFFSAKSI) is LKL, important for PAM recognition and DNA unwinding. The segment at 663 to 762 (PGANKMLPKV…FYREVENQGY (100 aa)) is PAM-interacting domain (PI). The tract at residues 671–677 (KVFFSAK) is binds DNA protospacer adjacent motif (PAM) on target DNA. A binds single-strand non-target DNA region spans residues 692 to 704 (RNHSTHTKNGSPQ). Positions 763–892 (KLTFENISES…PITINFKSSG (130 aa)) are wedge region 3. 2 binds crRNA regions span residues 791–794 (KDFS) and 803–804 (LH). Residues His-843, Lys-852, and Lys-869 each act as for pre-crRNA processing in the active site. 2 binds crRNA regions span residues 851 to 853 (NKN) and 865 to 873 (YDLIKDKRF). The segment at 893–953 (ANKFNDEINL…IGNDRMKTNY (61 aa)) is ruvC-I. Asp-917 (for DNase activity of RuvC domain) is an active-site residue. Positions 954–971 (HDKLAAIEKDRDSARKDW) are bridge helix. Residues 972-1078 (KKINNIKEMK…KQTGIIYYVP (107 aa)) form a ruvC-II region. The For DNase activity of RuvC domain role is filled by Glu-1006. A nuclease domain region spans residues 1079 to 1254 (AGFTSKICPV…QAPKNMPQDA (176 aa)). Catalysis depends on Asp-1255, which acts as the For DNase activity of RuvC domain. The tract at residues 1255 to 1300 (DANGAYHIGLKGLMLLGRIKNNQEGKKLNLVIKNEEYFEFVQNRNN) is ruvC-III.

The protein belongs to the CRISPR-associated endonuclease Cas12a family. As to quaternary structure, might be a homodimer. Might be a monomer. Ca(2+) is required as a cofactor. Mg(2+) serves as cofactor.

It catalyses the reaction Endonucleolytic cleavage to 5'-phosphodinucleotide and 5'-phosphooligonucleotide end-products.. The enzyme catalyses RNA = a 5'-hydroxy-ribonucleotide + n nucleoside-2',3'-cyclophosphates.. Its function is as follows. CRISPR (clustered regularly interspaced short palindromic repeat), is an adaptive immune system that provides protection against mobile genetic elements (viruses, transposable elements and conjugative plasmids). CRISPR clusters contain sequences complementary to antecedent mobile elements and target invading nucleic acids. CRISPR clusters are transcribed and processed into CRISPR RNA (crRNA). Has endonuclease activity on pre-crRNA and dsDNA, using different active sites. A single-RNA guided endonuclease that is also capable of guiding crRNA processing; correct processing of pre-crRNA requires only this protein and the CRISPR locus. pre-crRNA processing proceeds by an intramolecular nucleophilic attack on the scissile phosphate by the 2'-OH of the upstream ribonucleotide, the divalent cation (which is bound by the crRNA) is probably required for ordering the crRNA pseudoknot and/or increasing RNA binding. RNA mutagenesis studies show pre-crRNA cleavage is highly sequence- and structure-specific. Forms a complex with crRNA and complementary dsDNA, where the crRNA displaces the non-target DNA strand and directs endonucleolytic cleavage of both strands of the DNA. Cleavage results in staggered 5-base 5' overhangs 14-18 and 21-23 bases downstream of the PAM (protospacer adjacent motif) on the non-target and target strands respectively. Both target and non-target strand DNA are probably independently cleaved in the same active site. When this protein is expressed in E.coli it prevents plasmids homologous to the first CRISPR spacer from transforming, formally showing it is responsible for plasmid immunity. The chain is CRISPR-associated endonuclease Cas12a from Francisella tularensis subsp. novicida (strain U112).